We begin with the raw amino-acid sequence, 431 residues long: Gamma-glutamyl phosphate reductase (431 aa).

Belongs to the gamma-glutamyl phosphate reductase family.

The protein localises to the cytoplasm. The enzyme catalyses L-glutamate 5-semialdehyde + phosphate + NADP(+) = L-glutamyl 5-phosphate + NADPH + H(+). Its pathway is amino-acid biosynthesis; L-proline biosynthesis; L-glutamate 5-semialdehyde from L-glutamate: step 2/2. Its function is as follows. Catalyzes the NADPH-dependent reduction of L-glutamate 5-phosphate into L-glutamate 5-semialdehyde and phosphate. The product spontaneously undergoes cyclization to form 1-pyrroline-5-carboxylate. The chain is Gamma-glutamyl phosphate reductase from Acetivibrio thermocellus (strain ATCC 27405 / DSM 1237 / JCM 9322 / NBRC 103400 / NCIMB 10682 / NRRL B-4536 / VPI 7372) (Clostridium thermocellum).